The primary structure comprises 465 residues: MESLRIYNTLARDKQVFVPRQPGEVRMYVCGITVYDYCHVGHARMLVVFDLVQRWLRAIGYRVTYVRNITDIDDKIIRRAVENGETIKSLTDRFIDAMHEDEDALGIQRPDIEPRATQFIPQMLGMIERLEANGYAYQATDGDVNYSVRKFANYGKLSGKSLDDLRAGERVAANDAKEDPLDFVLWKRAKADDPEGASWESKYGMGRPGWHIECSAMGCTLLGEHFDIHGGGQDLQFPHHENEIAQSEGATGQTFVNYWLHNGFVQVDNEKMSKSLGNFFTIREVLERYDAEVMRFFIVRTHYRSPLNYSDVHLDDARASLTRLYTALKDVEPDALALDWNEPHAQRFAAAMNDDFNTPVAIATLFELAGEVNRTRDASLARQLKQLAGLLGLLGREPRAFLQQASGAAQAGALSVDEIEAKIAARAAAKRAKDYAEADRIRAELLDAGVALEDKPGGSTEWRRV.

Cysteine 30 contributes to the Zn(2+) binding site. Residues 32 to 42 (ITVYDYCHVGH) carry the 'HIGH' region motif. Cysteine 214, histidine 239, and glutamate 243 together coordinate Zn(2+). The short motif at 271–275 (KMSKS) is the 'KMSKS' region element. Lysine 274 lines the ATP pocket.

The protein belongs to the class-I aminoacyl-tRNA synthetase family. As to quaternary structure, monomer. It depends on Zn(2+) as a cofactor.

It localises to the cytoplasm. The enzyme catalyses tRNA(Cys) + L-cysteine + ATP = L-cysteinyl-tRNA(Cys) + AMP + diphosphate. This Burkholderia multivorans (strain ATCC 17616 / 249) protein is Cysteine--tRNA ligase.